We begin with the raw amino-acid sequence, 244 residues long: Leucyl/phenylalanyl-tRNA--protein transferase (244 aa).

Belongs to the L/F-transferase family.

It is found in the cytoplasm. It carries out the reaction N-terminal L-lysyl-[protein] + L-leucyl-tRNA(Leu) = N-terminal L-leucyl-L-lysyl-[protein] + tRNA(Leu) + H(+). The enzyme catalyses N-terminal L-arginyl-[protein] + L-leucyl-tRNA(Leu) = N-terminal L-leucyl-L-arginyl-[protein] + tRNA(Leu) + H(+). The catalysed reaction is L-phenylalanyl-tRNA(Phe) + an N-terminal L-alpha-aminoacyl-[protein] = an N-terminal L-phenylalanyl-L-alpha-aminoacyl-[protein] + tRNA(Phe). In terms of biological role, functions in the N-end rule pathway of protein degradation where it conjugates Leu, Phe and, less efficiently, Met from aminoacyl-tRNAs to the N-termini of proteins containing an N-terminal arginine or lysine. In Janthinobacterium sp. (strain Marseille) (Minibacterium massiliensis), this protein is Leucyl/phenylalanyl-tRNA--protein transferase.